Reading from the N-terminus, the 75-residue chain is Cytochrome c oxidase subunit 6C (75 aa).

At 1–13 the chain is on the mitochondrial matrix side; that stretch reads MSSGALTKPQMRG. Residues 14–54 form a helical membrane-spanning segment; the sequence is LLAKRLRFHIVGAFAVSLGVAAFYKFAVAEPRKKAYADFYR. The Mitochondrial intermembrane portion of the chain corresponds to 55-75; that stretch reads NYDSMKDFEEMRKAGIFQSAK.

This sequence belongs to the cytochrome c oxidase subunit 6c family. In terms of assembly, component of the cytochrome c oxidase (complex IV, CIV), a multisubunit enzyme composed of 14 subunits. The complex is composed of a catalytic core of 3 subunits MT-CO1, MT-CO2 and MT-CO3, encoded in the mitochondrial DNA, and 11 supernumerary subunits COX4I, COX5A, COX5B, COX6A, COX6B, COX6C, COX7A, COX7B, COX7C, COX8 and NDUFA4, which are encoded in the nuclear genome. The complex exists as a monomer or a dimer and forms supercomplexes (SCs) in the inner mitochondrial membrane with NADH-ubiquinone oxidoreductase (complex I, CI) and ubiquinol-cytochrome c oxidoreductase (cytochrome b-c1 complex, complex III, CIII), resulting in different assemblies (supercomplex SCI(1)III(2)IV(1) and megacomplex MCI(2)III(2)IV(2)).

The protein resides in the mitochondrion inner membrane. Its pathway is energy metabolism; oxidative phosphorylation. In terms of biological role, component of the cytochrome c oxidase, the last enzyme in the mitochondrial electron transport chain which drives oxidative phosphorylation. The respiratory chain contains 3 multisubunit complexes succinate dehydrogenase (complex II, CII), ubiquinol-cytochrome c oxidoreductase (cytochrome b-c1 complex, complex III, CIII) and cytochrome c oxidase (complex IV, CIV), that cooperate to transfer electrons derived from NADH and succinate to molecular oxygen, creating an electrochemical gradient over the inner membrane that drives transmembrane transport and the ATP synthase. Cytochrome c oxidase is the component of the respiratory chain that catalyzes the reduction of oxygen to water. Electrons originating from reduced cytochrome c in the intermembrane space (IMS) are transferred via the dinuclear copper A center (CU(A)) of subunit 2 and heme A of subunit 1 to the active site in subunit 1, a binuclear center (BNC) formed by heme A3 and copper B (CU(B)). The BNC reduces molecular oxygen to 2 water molecules using 4 electrons from cytochrome c in the IMS and 4 protons from the mitochondrial matrix. The sequence is that of Cytochrome c oxidase subunit 6C (COX6C) from Carlito syrichta (Philippine tarsier).